The primary structure comprises 407 residues: Phenazine 1,6-dicarboxylic acid hydroxylase PhzS (407 aa).

3 residues coordinate FAD: Gly-17, Val-134, and Asp-313.

Requires FAD as cofactor.

The enzyme catalyses phenazine-1,6-dicarboxylate + NADH + O2 + 2 H(+) = 6-hydroxyphenazine-1-carboxylate + CO2 + NAD(+) + H2O. It carries out the reaction 6-hydroxyphenazine-1-carboxylate + NADH + O2 + 2 H(+) = 1,6-dihydroxyphenazine + CO2 + NAD(+) + H2O. The catalysed reaction is phenazine-1-carboxylate + NADH + O2 + 2 H(+) = 1-hydroxyphenazine + CO2 + NAD(+) + H2O. Involved in the biosynthesis of phenazine natural products including myxin, an N(5),N(10)-dioxide phenazine antiobiotic, which has antimicrobial activity. Catalyzes the decarboxylative hydroxylations of phenazine 1,6-dicarboxylic acid (PDC) to produce 1,6-dihydroxyphenazine (DHP). Low activity with phenazine 1-carboxylic acid (PCA) to produce 1-hydroxyphenazine. The chain is Phenazine 1,6-dicarboxylic acid hydroxylase PhzS from Lysobacter antibioticus.